A 319-amino-acid polypeptide reads, in one-letter code: Methionyl-tRNA formyltransferase (319 aa).

A (6S)-5,6,7,8-tetrahydrofolate-binding site is contributed by 113 to 116; that stretch reads SLLP.

Belongs to the Fmt family.

The enzyme catalyses L-methionyl-tRNA(fMet) + (6R)-10-formyltetrahydrofolate = N-formyl-L-methionyl-tRNA(fMet) + (6S)-5,6,7,8-tetrahydrofolate + H(+). Attaches a formyl group to the free amino group of methionyl-tRNA(fMet). The formyl group appears to play a dual role in the initiator identity of N-formylmethionyl-tRNA by promoting its recognition by IF2 and preventing the misappropriation of this tRNA by the elongation apparatus. The sequence is that of Methionyl-tRNA formyltransferase from Pseudomonas fluorescens (strain ATCC BAA-477 / NRRL B-23932 / Pf-5).